A 180-amino-acid polypeptide reads, in one-letter code: tRNA (cytidine(56)-2'-O)-methyltransferase (180 aa).

Leu85 is a binding site for S-adenosyl-L-methionine.

This sequence belongs to the aTrm56 family. Homodimer.

The protein resides in the cytoplasm. The catalysed reaction is cytidine(56) in tRNA + S-adenosyl-L-methionine = 2'-O-methylcytidine(56) in tRNA + S-adenosyl-L-homocysteine + H(+). Specifically catalyzes the AdoMet-dependent 2'-O-ribose methylation of cytidine at position 56 in tRNAs. This Methanobrevibacter smithii (strain ATCC 35061 / DSM 861 / OCM 144 / PS) protein is tRNA (cytidine(56)-2'-O)-methyltransferase.